A 424-amino-acid chain; its full sequence is Omega-6 fatty acid desaturase, chloroplastic (424 aa).

A chloroplast-targeting transit peptide spans 1 to 63 (MACTLADSLL…TRNKVTVIHA (63 aa)). Residue Val64 is modified to N-acetylvaline. A Histidine box-1 motif is present at residues 165–169 (HDCAH). The Histidine box-2 motif lies at 201–205 (HDRHH). The Histidine box-3 motif lies at 361–365 (HIPHH).

It belongs to the fatty acid desaturase type 1 family.

It is found in the plastid. The protein localises to the chloroplast membrane. It catalyses the reaction a (9Z)-octadecenoyl-containing glycerolipid + 2 reduced [2Fe-2S]-[ferredoxin] + O2 + 2 H(+) = a (9Z,12Z)-octadecadienoyl-containing glycerolipid + 2 oxidized [2Fe-2S]-[ferredoxin] + 2 H2O. It functions in the pathway lipid metabolism; polyunsaturated fatty acid biosynthesis. Its function is as follows. Chloroplast omega-6 fatty acid desaturase introduces the second double bond in the biosynthesis of 16:3 and 18:3 fatty acids, important constituents of plant membranes. It is thought to use ferredoxin as an electron donor and to act on fatty acids esterified to galactolipids, sulfolipids and phosphatidylglycerol. This is Omega-6 fatty acid desaturase, chloroplastic from Glycine max (Soybean).